A 763-amino-acid polypeptide reads, in one-letter code: Phosphoglycerol transferase I (763 aa).

4 helical membrane passes run 4–19 (LLSFALFLASVLIYAW), 26–48 (WWFAATLTVLGLFVVLNITLFAS), 76–98 (YILPGIGIVLGLTAVFGALGWIL), and 105–127 (PHHFGYSLLALLLALGSVDASPA).

This sequence belongs to the OpgB family.

It localises to the cell inner membrane. The catalysed reaction is a phosphatidylglycerol + a membrane-derived-oligosaccharide D-glucose = a 1,2-diacyl-sn-glycerol + a membrane-derived-oligosaccharide 6-(glycerophospho)-D-glucose.. It functions in the pathway glycan metabolism; osmoregulated periplasmic glucan (OPG) biosynthesis. Its function is as follows. Transfers a phosphoglycerol residue from phosphatidylglycerol to the membrane-bound nascent glucan backbones. The chain is Phosphoglycerol transferase I from Escherichia coli O157:H7.